The sequence spans 82 residues: Sec-independent protein translocase protein TatA (82 aa).

The helical transmembrane segment at 2-22 (GFGGISLWQLLIVLAIIVLLF) threads the bilayer. The segment at 43-82 (KAMSDEKNTDKEKPEQIQKSEESAPLDSAHTEKNKDNNKV) is disordered. 2 stretches are compositionally biased toward basic and acidic residues: residues 44–64 (AMSD…KSEE) and 71–82 (AHTEKNKDNNKV).

The protein belongs to the TatA/E family. The Tat system comprises two distinct complexes: a TatABC complex, containing multiple copies of TatA, TatB and TatC subunits, and a separate TatA complex, containing only TatA subunits. Substrates initially bind to the TatABC complex, which probably triggers association of the separate TatA complex to form the active translocon.

The protein localises to the cell inner membrane. Its function is as follows. Part of the twin-arginine translocation (Tat) system that transports large folded proteins containing a characteristic twin-arginine motif in their signal peptide across membranes. TatA could form the protein-conducting channel of the Tat system. This Pseudoalteromonas translucida (strain TAC 125) protein is Sec-independent protein translocase protein TatA.